The chain runs to 168 residues: Segregation and condensation protein B (168 aa).

The protein belongs to the ScpB family. In terms of assembly, homodimer. Homodimerization may be required to stabilize the binding of ScpA to the Smc head domains. Component of a cohesin-like complex composed of ScpA, ScpB and the Smc homodimer, in which ScpA and ScpB bind to the head domain of Smc. The presence of the three proteins is required for the association of the complex with DNA.

The protein resides in the cytoplasm. In terms of biological role, participates in chromosomal partition during cell division. May act via the formation of a condensin-like complex containing Smc and ScpA that pull DNA away from mid-cell into both cell halves. The chain is Segregation and condensation protein B from Caldanaerobacter subterraneus subsp. tengcongensis (strain DSM 15242 / JCM 11007 / NBRC 100824 / MB4) (Thermoanaerobacter tengcongensis).